The primary structure comprises 237 residues: Small ribosomal subunit protein uS3 (237 aa).

Positions 39–107 (VRQFLTKELK…PAQINISEVR (69 aa)) constitute a KH type-2 domain.

This sequence belongs to the universal ribosomal protein uS3 family. As to quaternary structure, part of the 30S ribosomal subunit. Forms a tight complex with proteins S10 and S14.

Binds the lower part of the 30S subunit head. Binds mRNA in the 70S ribosome, positioning it for translation. The polypeptide is Small ribosomal subunit protein uS3 (Aeromonas hydrophila subsp. hydrophila (strain ATCC 7966 / DSM 30187 / BCRC 13018 / CCUG 14551 / JCM 1027 / KCTC 2358 / NCIMB 9240 / NCTC 8049)).